Consider the following 283-residue polypeptide: Orotidine 5'-phosphate decarboxylase (283 aa).

Residues D40, 62–64, 93–102, Y220, and R239 each bind substrate; these read KTH and DRKFADIGNT. The active-site Proton donor is the K95.

Belongs to the OMP decarboxylase family.

The catalysed reaction is orotidine 5'-phosphate + H(+) = UMP + CO2. The protein operates within pyrimidine metabolism; UMP biosynthesis via de novo pathway; UMP from orotate: step 2/2. The chain is Orotidine 5'-phosphate decarboxylase (PYR6) from Mycosarcoma maydis (Corn smut fungus).